An 823-amino-acid chain; its full sequence is Protein Shroom1 (823 aa).

Met1 is modified (N-acetylmethionine). Disordered stretches follow at residues Met1–Leu55, Pro72–Gln110, and Ala124–Gln159. Composition is skewed to polar residues over residues Arg28–Pro50 and Pro72–Pro85. 6 positions are modified to phosphoserine: Ser103, Ser133, Ser137, Ser166, Ser190, and Ser224. One can recognise an ASD1 domain in the interval Leu145–Gly233. Residues Thr181 to Arg200 form a disordered region. Disordered regions lie at residues Ser270–Lys303 and Gln349–Asp375. Thr383 bears the Phosphothreonine mark. The residue at position 385 (Ser385) is a Phosphoserine. Disordered regions lie at residues Leu420–Gly503 and Glu566–Ala620. Polar residues-rich tracts occupy residues Arg444–Ser468, Ser489–Gly503, and Gln586–Ala620. Residues Glu517 to Ser796 form the ASD2 domain.

Belongs to the shroom family. In terms of assembly, interacts with F-actin.

It localises to the cytoplasm. The protein localises to the cytoskeleton. May be involved in the assembly of microtubule arrays during cell elongation. The chain is Protein Shroom1 (Shroom1) from Mus musculus (Mouse).